The following is a 432-amino-acid chain: Glycerophosphocholine acyltransferase 1 (432 aa).

The Cytoplasmic segment spans residues 1 to 110; the sequence is MYKLDNNDID…DSIFFKNSSR (110 aa). A Phosphoserine modification is found at Ser-78. Residues 111-131 traverse the membrane as a helical segment; that stretch reads LEKAFYPFTLFNIFFIGFLMG. Residue Arg-132 is a topological domain, lumenal. A helical transmembrane segment spans residues 133–153; sequence FPEWFHVYYTILFFVLMPIRF. The Cytoplasmic portion of the chain corresponds to 154–162; sequence YTYYKTKNH. A helical transmembrane segment spans residues 163–183; it reads YFLADFCYFVNMLCLLFIWIF. The Lumenal portion of the chain corresponds to 184–187; that stretch reads PYSY. The chain crosses the membrane as a helical span at residues 188–208; sequence SLFQSCFAFTFGTLCFAVITW. The Cytoplasmic segment spans residues 209-221; that stretch reads RNSLVIHSIDKTT. A helical transmembrane segment spans residues 222-242; that stretch reads SCFIHIIPPCVMYVIYHGLPL. The Lumenal segment spans residues 243-263; it reads EYKIERFPGAIIQSELDIKKN. The helical transmembrane segment at 264 to 284 threads the bilayer; the sequence is ILWTSLYYLVWQSLYHYFITL. Residues 285 to 318 lie on the Cytoplasmic side of the membrane; sequence KKSSKIKSGERMTSFEYLTTHQFKNFWAVKLRSP. Residues 319 to 339 form a helical membrane-spanning segment; sequence WPMIIYTLSQYFYQLFTMLLC. At 340–346 the chain is on the lumenal side; sequence GIWIRYK. The helical transmembrane segment at 347–369 threads the bilayer; that stretch reads LAAALFLTIVFLWASHNGATYYI. Residues 370–432 lie on the Cytoplasmic side of the membrane; the sequence is DHYGKNFEKE…DSSSVSSKSD (63 aa). The disordered stretch occupies residues 413–432; the sequence is LNVNRDEDFDDSSSVSSKSD.

It belongs to the GPC1 family.

The protein localises to the membrane. It catalyses the reaction sn-glycerol 3-phosphocholine + an acyl-CoA = a 1-acyl-sn-glycero-3-phosphocholine + CoA. The enzyme catalyses sn-glycero-3-phosphoethanolamine + an acyl-CoA = a monoacyl-sn-glycero-3-phosphoethanolamine + CoA. It carries out the reaction sn-glycero-3-phosphoethanolamine + (9Z)-octadecenoyl-CoA = (9Z-octadecenoyl)-sn-glycero-3-phosphoethanolamine + CoA. The catalysed reaction is sn-glycerol 3-phosphocholine + hexadecanoyl-CoA = hexadecanoyl-sn-glycero-3-phosphocholine + CoA. It catalyses the reaction (9Z,12Z)-octadecadienoyl-CoA + sn-glycerol 3-phosphocholine = (9Z,12Z-octadecadienoyl)-sn-glycero-3-phosphocholine + CoA. The enzyme catalyses (12R)-hydroxy-(9Z)-octadecenoyl-CoA + sn-glycerol 3-phosphocholine = (12R-hydroxy-9Z-octadecenoyl)-sn-glycero-3-phosphocholine + CoA. It carries out the reaction (9Z,12Z,15Z)-octadecatrienoyl-CoA + sn-glycerol 3-phosphocholine = (9Z,12Z,15Z-octadecatrienoyl)-sn-glycero-3-phosphocholine + CoA. The catalysed reaction is sn-glycerol 3-phosphocholine + (9Z)-octadecenoyl-CoA = (9Z-octadecenoyl)-sn-glycero-3-phosphocholine + CoA. It catalyses the reaction 1-(9Z-octadecenoyl)-sn-glycero-3-phosphoethanolamine + sn-glycerol 3-phosphocholine = (9Z-octadecenoyl)-sn-glycero-3-phosphocholine + sn-glycero-3-phosphoethanolamine. Its activity is regulated as follows. The GPCAT activity is sensitive to N-ethylmaleimide, phenanthroline, and divalent cations including Ca(2+), Mg(2+), Mn(2+) and Zn(2+). The activity is also inhibited by glycerol-3-phosphate (G3P). Its function is as follows. Glycerophosphocholine acyltransferase (GPCAT) that utilizes acyl-CoA to acylate glycero-3-phosphocholine (GPC), forming lysophosphatidylcholine (LPC). Shows broad acyl specificities with a preference for 16:0-CoA, polyunsaturated acyl-CoA, and the hydroxylated ricinoleoyl-CoA. Also catalyzes the acylation of glycero-3-phosphoethanolamine (GPE) with acyl-CoA. In addition to acyl-CoA, GPCAT efficiently utilizes LPC and lysophosphatidylethanolamine (LPE) as acyl donors in the acylation of GPC. Contributes to the maintenance of phosphatidylcholine (PC) homeostasis and might also have specific functions in acyl editing of PC, such as transferring acyl groups modified at the sn-2 position of PC to the sn-1. Involved in postsynthetic PC remodeling that produces more saturated PC species. This chain is Glycerophosphocholine acyltransferase 1, found in Saccharomyces cerevisiae (strain ATCC 204508 / S288c) (Baker's yeast).